The primary structure comprises 492 residues: Glutamyl-tRNA(Gln) amidotransferase subunit A (492 aa).

Active-site charge relay system residues include lysine 78 and serine 158. The active-site Acyl-ester intermediate is serine 182.

This sequence belongs to the amidase family. GatA subfamily. In terms of assembly, heterotrimer of A, B and C subunits.

The catalysed reaction is L-glutamyl-tRNA(Gln) + L-glutamine + ATP + H2O = L-glutaminyl-tRNA(Gln) + L-glutamate + ADP + phosphate + H(+). Functionally, allows the formation of correctly charged Gln-tRNA(Gln) through the transamidation of misacylated Glu-tRNA(Gln) in organisms which lack glutaminyl-tRNA synthetase. The reaction takes place in the presence of glutamine and ATP through an activated gamma-phospho-Glu-tRNA(Gln). The sequence is that of Glutamyl-tRNA(Gln) amidotransferase subunit A from Rhodopseudomonas palustris (strain BisB5).